We begin with the raw amino-acid sequence, 131 residues long: ATP synthase epsilon chain, chloroplastic (131 aa).

Belongs to the ATPase epsilon chain family. In terms of assembly, F-type ATPases have 2 components, CF(1) - the catalytic core - and CF(0) - the membrane proton channel. CF(1) has five subunits: alpha(3), beta(3), gamma(1), delta(1), epsilon(1). CF(0) has three main subunits: a, b and c.

It is found in the plastid. The protein resides in the chloroplast thylakoid membrane. Its function is as follows. Produces ATP from ADP in the presence of a proton gradient across the membrane. The chain is ATP synthase epsilon chain, chloroplastic from Guillardia theta (Cryptophyte).